The chain runs to 763 residues: Pentatricopeptide repeat-containing protein At4g32430, mitochondrial (763 aa).

Residues 1 to 38 (MTLLNYLHCNRSKSFLFQRFYSPYRIAHKLFDGSSQRN) constitute a mitochondrion transit peptide. PPR repeat units follow at residues 77 to 109 (DEVT…GFTS), 110 to 140 (FVCV…LVDP), 141 to 172 (DVVS…GVVF), 173 to 207 (DAFT…GLES), 208 to 238 (DLVV…MSFK), 239 to 274 (DMIS…GVEL), 275 to 309 (DHVS…GYES), 310 to 344 (LLEV…NVVS), 350 to 370 (SSNK…GVYP), 371 to 405 (NEVT…GFVS), 406 to 436 (EPSV…ITFR), 437 to 471 (EIIS…TMPN), 472 to 507 (EYTF…GLNS), 508 to 538 (CPVV…MSQK), 539 to 573 (NQFV…NVAP), 574 to 604 (DLVT…MIEV), and 610 to 640 (SHEH…VPGG). A type E motif region spans residues 645–720 (MLQSMLGSCR…EAGFSWIDVG (76 aa)). Residues 724 to 756 (GSLTMQGFSSGDKSHPKSDEIYRMVEIIGLEMN) are type E(+) motif.

It belongs to the PPR family. PCMP-E subfamily.

The protein resides in the mitochondrion. The sequence is that of Pentatricopeptide repeat-containing protein At4g32430, mitochondrial (PCMP-E40) from Arabidopsis thaliana (Mouse-ear cress).